The following is a 598-amino-acid chain: Vanadium-dependent bromoperoxidase (598 aa).

Ca(2+)-binding residues include Phe361, Gln363, Asp365, Asp368, and Gln370. Positions 400 and 408 each coordinate vanadate. Residue His480 is part of the active site. 5 residues coordinate vanadate: Ser485, Gly486, His487, Arg547, and His553. The active site involves His487.

It belongs to the vanadium-dependent haloperoxidase family. In terms of assembly, homododecamer. Ca(2+) is required as a cofactor. Requires vanadate as cofactor.

It catalyses the reaction RH + Br(-) + H2O2 = RBr + 2 H2O.. Functionally, catalyzes the halogenation of organic substrates in the presence of hydrogen peroxide. In Corallina pilulifera (Red coralline alga), this protein is Vanadium-dependent bromoperoxidase.